We begin with the raw amino-acid sequence, 40 residues long: Photosystem II reaction center protein J (40 aa).

Residues 8-28 (IPLWMIGTLAGILVISLIGIF) form a helical membrane-spanning segment.

Belongs to the PsbJ family. As to quaternary structure, PSII is composed of 1 copy each of membrane proteins PsbA, PsbB, PsbC, PsbD, PsbE, PsbF, PsbH, PsbI, PsbJ, PsbK, PsbL, PsbM, PsbT, PsbX, PsbY, PsbZ, Psb30/Ycf12, at least 3 peripheral proteins of the oxygen-evolving complex and a large number of cofactors. It forms dimeric complexes.

The protein resides in the plastid membrane. In terms of biological role, one of the components of the core complex of photosystem II (PSII). PSII is a light-driven water:plastoquinone oxidoreductase that uses light energy to abstract electrons from H(2)O, generating O(2) and a proton gradient subsequently used for ATP formation. It consists of a core antenna complex that captures photons, and an electron transfer chain that converts photonic excitation into a charge separation. In Cuscuta gronovii (Common dodder), this protein is Photosystem II reaction center protein J.